Reading from the N-terminus, the 183-residue chain is Dual-action ribosomal maturation protein DarP (183 aa).

The protein belongs to the DarP family.

The protein resides in the cytoplasm. Its function is as follows. Member of a network of 50S ribosomal subunit biogenesis factors which assembles along the 30S-50S interface, preventing incorrect 23S rRNA structures from forming. Promotes peptidyl transferase center (PTC) maturation. This is Dual-action ribosomal maturation protein DarP from Salmonella gallinarum (strain 287/91 / NCTC 13346).